A 204-amino-acid polypeptide reads, in one-letter code: Peptide deformylase (204 aa).

Fe cation-binding residues include Cys-131 and His-174. Glu-175 is a catalytic residue. Residue His-178 participates in Fe cation binding.

This sequence belongs to the polypeptide deformylase family. Fe(2+) is required as a cofactor.

It catalyses the reaction N-terminal N-formyl-L-methionyl-[peptide] + H2O = N-terminal L-methionyl-[peptide] + formate. In terms of biological role, removes the formyl group from the N-terminal Met of newly synthesized proteins. Requires at least a dipeptide for an efficient rate of reaction. N-terminal L-methionine is a prerequisite for activity but the enzyme has broad specificity at other positions. This is Peptide deformylase from Streptococcus pyogenes serotype M49 (strain NZ131).